Reading from the N-terminus, the 1850-residue chain is Chitin synthase V (1850 aa).

The tract at residues 1–27 is disordered; the sequence is MASTLPPLGGGNGGPHTQHSLPSLPAH. Residues 1-779 enclose the Myosin motor domain; that stretch reads MASTLPPLGG…EIAGLVDGSA (779 aa). 105 to 112 is an ATP binding site; sequence GESGSGKS. 5 N-linked (GlcNAc...) asparagine glycosylation sites follow: asparagine 245, asparagine 290, asparagine 427, asparagine 481, and asparagine 558. The disordered stretch occupies residues 289 to 309; the sequence is NNTSATGDDSGGFSHEGGQTS. The segment at 593-647 is disordered; sequence SKPMRAPSVMSRKGGRGRGIASQRRQQESNLFDSGNTHAESRSPKGGNKGGIDQG. Residues 620–630 are compositionally biased toward polar residues; the sequence is ESNLFDSGNTH. An actin-binding region spans residues 656–680; the sequence is LDNVQKAVTDPGTNAYFVFCLKPND. 2 helical membrane passes run 884–904 and 923–943; these read WVFT…RWIG and MLIW…PMLI. The region spanning 947-1006 is the Cytochrome b5 heme-binding domain; it reads QNVFSAAELSSHNGKDGNSAYVSIRGHVIDLGSFADRHYPSFVSRKTMLNYAGMDVSSLF. Asparagine 1033, asparagine 1058, and asparagine 1186 each carry an N-linked (GlcNAc...) asparagine glycan. The chain crosses the membrane as a helical span at residues 1196 to 1216; that stretch reads LVLAVSILLVSVIAFKFFAAL. 2 N-linked (GlcNAc...) asparagine glycosylation sites follow: asparagine 1453 and asparagine 1559. Helical transmembrane passes span 1568–1588, 1590–1610, 1617–1637, and 1644–1664; these read LIPM…VVFI, LLST…IVLV, VPIT…IIFI, and MVGW…GLPL. An N-linked (GlcNAc...) asparagine glycan is attached at asparagine 1767. The DEK-C domain occupies 1800–1850; it reads LPSDDALLAEIRDILKTADLMTVTKKGIKQELERRFDVPLDAKRAYINSGK.

It in the N-terminal section; belongs to the TRAFAC class myosin-kinesin ATPase superfamily. Myosin family. The protein in the C-terminal section; belongs to the chitin synthase family. Class V subfamily. Expressed in conidia and during appressorium formation.

The protein localises to the cell membrane. The protein resides in the cell septum. Its subcellular location is the cell tip. The catalysed reaction is [(1-&gt;4)-N-acetyl-beta-D-glucosaminyl](n) + UDP-N-acetyl-alpha-D-glucosamine = [(1-&gt;4)-N-acetyl-beta-D-glucosaminyl](n+1) + UDP + H(+). Functionally, polymerizes chitin, a structural polymer of the cell wall and septum, by transferring the sugar moiety of UDP-GlcNAc to the non-reducing end of the growing chitin polymer. Contributes to the production of conidia and the ability of fungal conidia to germinate. Involved in the fungal cell wall integrity and the ability of conidia to withstand biophysical pressure. Required for appressorium formation and evasion of insect cellular and/or humoral defenses, promoting the fungal dimorphic transition to the production of hyphal bodies that occurs within hosts, and ultimately to virulence. In Metarhizium acridum (strain CQMa 102), this protein is Chitin synthase V.